A 612-amino-acid polypeptide reads, in one-letter code: Dihydroxy-acid dehydratase (612 aa).

D81 provides a ligand contact to Mg(2+). C122 provides a ligand contact to [2Fe-2S] cluster. The Mg(2+) site is built by D123 and K124. K124 carries the post-translational modification N6-carboxylysine. C195 is a binding site for [2Fe-2S] cluster. Residue E491 coordinates Mg(2+). S517 serves as the catalytic Proton acceptor.

This sequence belongs to the IlvD/Edd family. In terms of assembly, homodimer. The cofactor is [2Fe-2S] cluster. Mg(2+) serves as cofactor.

It catalyses the reaction (2R)-2,3-dihydroxy-3-methylbutanoate = 3-methyl-2-oxobutanoate + H2O. The enzyme catalyses (2R,3R)-2,3-dihydroxy-3-methylpentanoate = (S)-3-methyl-2-oxopentanoate + H2O. It participates in amino-acid biosynthesis; L-isoleucine biosynthesis; L-isoleucine from 2-oxobutanoate: step 3/4. It functions in the pathway amino-acid biosynthesis; L-valine biosynthesis; L-valine from pyruvate: step 3/4. Its function is as follows. Functions in the biosynthesis of branched-chain amino acids. Catalyzes the dehydration of (2R,3R)-2,3-dihydroxy-3-methylpentanoate (2,3-dihydroxy-3-methylvalerate) into 2-oxo-3-methylpentanoate (2-oxo-3-methylvalerate) and of (2R)-2,3-dihydroxy-3-methylbutanoate (2,3-dihydroxyisovalerate) into 2-oxo-3-methylbutanoate (2-oxoisovalerate), the penultimate precursor to L-isoleucine and L-valine, respectively. The chain is Dihydroxy-acid dehydratase from Rhizobium johnstonii (strain DSM 114642 / LMG 32736 / 3841) (Rhizobium leguminosarum bv. viciae).